The sequence spans 422 residues: Signal recognition particle receptor FtsY (422 aa).

The tract at residues 39 to 86 is disordered; sequence PERGVVDRSGGYTASSGITFSQTPTTQPAERIDTSGLPAVGDDATVPR. Over residues 50 to 66 the composition is skewed to polar residues; that stretch reads YTASSGITFSQTPTTQP. GTP contacts are provided by residues 230-237, 312-316, and 374-377; these read GVNGTGKT, DTAGR, and TKLD.

The protein belongs to the GTP-binding SRP family. FtsY subfamily. In terms of assembly, part of the signal recognition particle protein translocation system, which is composed of SRP and FtsY.

It is found in the cell membrane. The protein localises to the cytoplasm. The catalysed reaction is GTP + H2O = GDP + phosphate + H(+). Involved in targeting and insertion of nascent membrane proteins into the cytoplasmic membrane. Acts as a receptor for the complex formed by the signal recognition particle (SRP) and the ribosome-nascent chain (RNC). The sequence is that of Signal recognition particle receptor FtsY from Mycobacterium bovis (strain ATCC BAA-935 / AF2122/97).